We begin with the raw amino-acid sequence, 259 residues long: Isoprenyl transferase (259 aa).

D33 is an active-site residue. D33 is a binding site for Mg(2+). Substrate contacts are provided by residues 34–37 (GNRR), W38, H51, and 79–81 (STE). The active-site Proton acceptor is N82. Substrate-binding positions include R86, R208, and 214–216 (RMS). Mg(2+) is bound at residue E227.

Belongs to the UPP synthase family. Homodimer. Mg(2+) is required as a cofactor.

In terms of biological role, catalyzes the condensation of isopentenyl diphosphate (IPP) with allylic pyrophosphates generating different type of terpenoids. In Streptomyces fradiae (Streptomyces roseoflavus), this protein is Isoprenyl transferase.